Reading from the N-terminus, the 656-residue chain is DNA mismatch repair protein MutL (656 aa).

Belongs to the DNA mismatch repair MutL/HexB family.

In terms of biological role, this protein is involved in the repair of mismatches in DNA. It is required for dam-dependent methyl-directed DNA mismatch repair. May act as a 'molecular matchmaker', a protein that promotes the formation of a stable complex between two or more DNA-binding proteins in an ATP-dependent manner without itself being part of a final effector complex. The chain is DNA mismatch repair protein MutL from Lactococcus lactis subsp. lactis (strain IL1403) (Streptococcus lactis).